The following is a 399-amino-acid chain: tRNA-specific 2-thiouridylase MnmA (399 aa).

ATP is bound by residues 18 to 25 (AMSGGVDS) and Leu-44. Cys-112 functions as the Nucleophile in the catalytic mechanism. Residues Cys-112 and Cys-213 are joined by a disulfide bond. Gly-136 is a binding site for ATP. The tract at residues 163–165 (RDQ) is interaction with tRNA. Cys-213 (cysteine persulfide intermediate) is an active-site residue.

It belongs to the MnmA/TRMU family.

The protein resides in the cytoplasm. The enzyme catalyses S-sulfanyl-L-cysteinyl-[protein] + uridine(34) in tRNA + AH2 + ATP = 2-thiouridine(34) in tRNA + L-cysteinyl-[protein] + A + AMP + diphosphate + H(+). Functionally, catalyzes the 2-thiolation of uridine at the wobble position (U34) of tRNA, leading to the formation of s(2)U34. The protein is tRNA-specific 2-thiouridylase MnmA of Rhizobium leguminosarum bv. trifolii (strain WSM2304).